Here is a 375-residue protein sequence, read N- to C-terminus: uncharacterized protein (375 aa).

Lys99 is covalently cross-linked (Isoglutamyl lysine isopeptide (Lys-Gln) (interchain with Q-Cter in protein Pup)).

This sequence belongs to the IMPDH/GMPR family.

This is an uncharacterized protein from Mycolicibacterium smegmatis (strain ATCC 700084 / mc(2)155) (Mycobacterium smegmatis).